Here is a 503-residue protein sequence, read N- to C-terminus: Na(+)-translocating NADH-quinone reductase subunit B (503 aa).

The next 3 membrane-spanning stretches (helical) occupy residues 55–75 (MMLV…NSGL), 120–142 (IFLP…FAII), and 160–180 (LILP…FGVV). Thr-248 carries the FMN phosphoryl threonine modification. The next 5 helical transmembrane spans lie at 361–381 (TSTV…IASW), 384–404 (MLSF…MSIL), 417–437 (FFIP…LVFM), 452–472 (WLYG…NPAY), and 475–495 (GVML…NIAL).

The protein belongs to the NqrB/RnfD family. Composed of six subunits; NqrA, NqrB, NqrC, NqrD, NqrE and NqrF. The cofactor is FMN.

It is found in the cell inner membrane. It catalyses the reaction a ubiquinone + n Na(+)(in) + NADH + H(+) = a ubiquinol + n Na(+)(out) + NAD(+). NQR complex catalyzes the reduction of ubiquinone-1 to ubiquinol by two successive reactions, coupled with the transport of Na(+) ions from the cytoplasm to the periplasm. NqrA to NqrE are probably involved in the second step, the conversion of ubisemiquinone to ubiquinol. This Chlamydia trachomatis serovar A (strain ATCC VR-571B / DSM 19440 / HAR-13) protein is Na(+)-translocating NADH-quinone reductase subunit B.